The sequence spans 138 residues: Large ribosomal subunit protein uL16 (138 aa).

It belongs to the universal ribosomal protein uL16 family. In terms of assembly, part of the 50S ribosomal subunit.

Its function is as follows. Binds 23S rRNA and is also seen to make contacts with the A and possibly P site tRNAs. The chain is Large ribosomal subunit protein uL16 from Gluconacetobacter diazotrophicus (strain ATCC 49037 / DSM 5601 / CCUG 37298 / CIP 103539 / LMG 7603 / PAl5).